Consider the following 202-residue polypeptide: Small ribosomal subunit protein uS4c (202 aa).

The S4 RNA-binding domain occupies 90 to 158 (MRLDNIIFRL…ITKNIELSQK (69 aa)).

This sequence belongs to the universal ribosomal protein uS4 family. In terms of assembly, part of the 30S ribosomal subunit. Contacts protein S5. The interaction surface between S4 and S5 is involved in control of translational fidelity.

It is found in the plastid. It localises to the chloroplast. One of the primary rRNA binding proteins, it binds directly to 16S rRNA where it nucleates assembly of the body of the 30S subunit. Functionally, with S5 and S12 plays an important role in translational accuracy. In Marchantia romanica (Liverwort), this protein is Small ribosomal subunit protein uS4c (rps4).